The chain runs to 333 residues: Holliday junction branch migration complex subunit RuvB (333 aa).

The tract at residues 1–181 is large ATPase domain (RuvB-L); the sequence is MNDILNKEPM…FGISSHMEYY (181 aa). ATP-binding positions include Leu-20, Arg-21, Gly-62, Lys-65, Thr-66, Thr-67, 128–130, Arg-171, Tyr-181, and Arg-218; that span reads EDF. Thr-66 is a binding site for Mg(2+). The segment at 182–252 is small ATPAse domain (RuvB-S); the sequence is QERDLEEIVK…ITDKALSILD (71 aa). Residues 255–333 are head domain (RuvB-H); that stretch reads AAGLDYIDQK…HLGYVYNEED (79 aa). Positions 291, 310, and 315 each coordinate DNA.

Belongs to the RuvB family. In terms of assembly, homohexamer. Forms an RuvA(8)-RuvB(12)-Holliday junction (HJ) complex. HJ DNA is sandwiched between 2 RuvA tetramers; dsDNA enters through RuvA and exits via RuvB. An RuvB hexamer assembles on each DNA strand where it exits the tetramer. Each RuvB hexamer is contacted by two RuvA subunits (via domain III) on 2 adjacent RuvB subunits; this complex drives branch migration. In the full resolvosome a probable DNA-RuvA(4)-RuvB(12)-RuvC(2) complex forms which resolves the HJ.

It localises to the cytoplasm. The enzyme catalyses ATP + H2O = ADP + phosphate + H(+). Its function is as follows. The RuvA-RuvB-RuvC complex processes Holliday junction (HJ) DNA during genetic recombination and DNA repair, while the RuvA-RuvB complex plays an important role in the rescue of blocked DNA replication forks via replication fork reversal (RFR). RuvA specifically binds to HJ cruciform DNA, conferring on it an open structure. The RuvB hexamer acts as an ATP-dependent pump, pulling dsDNA into and through the RuvAB complex. RuvB forms 2 homohexamers on either side of HJ DNA bound by 1 or 2 RuvA tetramers; 4 subunits per hexamer contact DNA at a time. Coordinated motions by a converter formed by DNA-disengaged RuvB subunits stimulates ATP hydrolysis and nucleotide exchange. Immobilization of the converter enables RuvB to convert the ATP-contained energy into a lever motion, pulling 2 nucleotides of DNA out of the RuvA tetramer per ATP hydrolyzed, thus driving DNA branch migration. The RuvB motors rotate together with the DNA substrate, which together with the progressing nucleotide cycle form the mechanistic basis for DNA recombination by continuous HJ branch migration. Branch migration allows RuvC to scan DNA until it finds its consensus sequence, where it cleaves and resolves cruciform DNA. The polypeptide is Holliday junction branch migration complex subunit RuvB (Lactococcus lactis subsp. lactis (strain IL1403) (Streptococcus lactis)).